The primary structure comprises 505 residues: Argininosuccinate lyase (505 aa).

Belongs to the lyase 1 family. Argininosuccinate lyase subfamily.

The protein resides in the cytoplasm. The catalysed reaction is 2-(N(omega)-L-arginino)succinate = fumarate + L-arginine. The protein operates within amino-acid biosynthesis; L-arginine biosynthesis; L-arginine from L-ornithine and carbamoyl phosphate: step 3/3. The polypeptide is Argininosuccinate lyase (Rhodococcoides fascians (Rhodococcus fascians)).